The chain runs to 217 residues: Rhicadhesin receptor (217 aa).

The N-terminal stretch at 1–20 (MKLIAVLLLVVLATATTATA) is a signal peptide. Cys30 and Cys45 are joined by a disulfide. Residues Asn50 and Asn68 are each glycosylated (N-linked (GlcNAc...) asparagine). Positions 58 to 207 (SNLLVKQGAT…AFQIGTKEVQ (150 aa)) constitute a Cupin type-1 domain. Mn(2+)-binding residues include His107, His109, Glu114, and His153.

It belongs to the germin family. In terms of processing, glycosylated.

It localises to the secreted. It is found in the extracellular space. The protein localises to the apoplast. Its subcellular location is the cell wall. Its function is as follows. Putative receptor for bacterial rhicadhesin, an attachment protein of rhizobiaceae. The chain is Rhicadhesin receptor (GER1) from Pisum sativum (Garden pea).